The sequence spans 60 residues: Large ribosomal subunit protein bL32 (60 aa).

Positions 1–20 (MAVQKSRKSRSRRDMRRSHH) are enriched in basic residues. Residues 1–60 (MAVQKSRKSRSRRDMRRSHHHMEVAELSIDATTGEKHRRHHMTKDGFYRGRQLFKASQED) are disordered.

It belongs to the bacterial ribosomal protein bL32 family.

The chain is Large ribosomal subunit protein bL32 from Psychrobacter sp. (strain PRwf-1).